Reading from the N-terminus, the 619-residue chain is Dihydroxy-acid dehydratase (619 aa).

Mg(2+) is bound at residue Asp-80. Cys-121 contributes to the [2Fe-2S] cluster binding site. 2 residues coordinate Mg(2+): Asp-122 and Lys-123. Position 123 is an N6-carboxylysine (Lys-123). Cys-196 is a binding site for [2Fe-2S] cluster. Residue Glu-492 participates in Mg(2+) binding. The active-site Proton acceptor is the Ser-518.

It belongs to the IlvD/Edd family. Homodimer. [2Fe-2S] cluster is required as a cofactor. It depends on Mg(2+) as a cofactor.

It carries out the reaction (2R)-2,3-dihydroxy-3-methylbutanoate = 3-methyl-2-oxobutanoate + H2O. The catalysed reaction is (2R,3R)-2,3-dihydroxy-3-methylpentanoate = (S)-3-methyl-2-oxopentanoate + H2O. It functions in the pathway amino-acid biosynthesis; L-isoleucine biosynthesis; L-isoleucine from 2-oxobutanoate: step 3/4. It participates in amino-acid biosynthesis; L-valine biosynthesis; L-valine from pyruvate: step 3/4. Functionally, functions in the biosynthesis of branched-chain amino acids. Catalyzes the dehydration of (2R,3R)-2,3-dihydroxy-3-methylpentanoate (2,3-dihydroxy-3-methylvalerate) into 2-oxo-3-methylpentanoate (2-oxo-3-methylvalerate) and of (2R)-2,3-dihydroxy-3-methylbutanoate (2,3-dihydroxyisovalerate) into 2-oxo-3-methylbutanoate (2-oxoisovalerate), the penultimate precursor to L-isoleucine and L-valine, respectively. The protein is Dihydroxy-acid dehydratase of Bifidobacterium adolescentis (strain ATCC 15703 / DSM 20083 / NCTC 11814 / E194a).